Reading from the N-terminus, the 95-residue chain is Aspartyl/glutamyl-tRNA(Asn/Gln) amidotransferase subunit C (95 aa).

It belongs to the GatC family. Heterotrimer of A, B and C subunits.

The enzyme catalyses L-glutamyl-tRNA(Gln) + L-glutamine + ATP + H2O = L-glutaminyl-tRNA(Gln) + L-glutamate + ADP + phosphate + H(+). It carries out the reaction L-aspartyl-tRNA(Asn) + L-glutamine + ATP + H2O = L-asparaginyl-tRNA(Asn) + L-glutamate + ADP + phosphate + 2 H(+). In terms of biological role, allows the formation of correctly charged Asn-tRNA(Asn) or Gln-tRNA(Gln) through the transamidation of misacylated Asp-tRNA(Asn) or Glu-tRNA(Gln) in organisms which lack either or both of asparaginyl-tRNA or glutaminyl-tRNA synthetases. The reaction takes place in the presence of glutamine and ATP through an activated phospho-Asp-tRNA(Asn) or phospho-Glu-tRNA(Gln). The sequence is that of Aspartyl/glutamyl-tRNA(Asn/Gln) amidotransferase subunit C from Rhodospirillum centenum (strain ATCC 51521 / SW).